A 183-amino-acid polypeptide reads, in one-letter code: Bifunctional protein PyrR (183 aa).

The PRPP-binding signature appears at 102–114; it reads VVLVDDVLYTGRT.

This sequence belongs to the purine/pyrimidine phosphoribosyltransferase family. PyrR subfamily. As to quaternary structure, homodimer and homohexamer; in equilibrium.

It catalyses the reaction UMP + diphosphate = 5-phospho-alpha-D-ribose 1-diphosphate + uracil. In terms of biological role, regulates transcriptional attenuation of the pyrimidine nucleotide (pyr) operon by binding in a uridine-dependent manner to specific sites on pyr mRNA. This disrupts an antiterminator hairpin in the RNA and favors formation of a downstream transcription terminator, leading to a reduced expression of downstream genes. Also displays a weak uracil phosphoribosyltransferase activity which is not physiologically significant. The polypeptide is Bifunctional protein PyrR (Listeria monocytogenes serotype 4b (strain CLIP80459)).